The following is a 792-amino-acid chain: Ubiquitin carboxyl-terminal hydrolase 10 (792 aa).

Ala-2 is modified (N-acetylalanine). An interaction with p53/TP53 region spans residues 2 to 99; it reads ALHNPQYIFG…ILGCTTSKKI (98 aa). A G3BP1-binding region spans residues 6-21; it reads PQYIFGDFSPDEFNQF. Thr-24 carries the phosphothreonine modification. A disordered region spans residues 126–164; sequence SNAEAETLENDSGAGGLGQRERKKKKKRPPGYYSYLKDG. Ser-208 and Ser-223 each carry phosphoserine. The span at 300–309 shows a compositional bias: basic and acidic residues; the sequence is DEGADLDPAK. The segment at 300 to 323 is disordered; the sequence is DEGADLDPAKPESQSPPAESALSA. Residue Ser-314 is modified to Phosphoserine. Position 330 is a phosphoserine; by ATM (Ser-330). The disordered stretch occupies residues 350–369; the sequence is PMAYVETKCSPPVPSPLASE. Residues Ser-359 and Ser-364 each carry the phosphoserine modification. The 381-residue stretch at 409-789 folds into the USP domain; it reads RGLINKGNWC…TAYLLYYRRV (381 aa). The Nucleophile role is filled by Cys-418. Ser-541 carries the phosphoserine modification. The disordered stretch occupies residues 542–580; sequence PTHEKHSVSNGPRSDLIEDEELEDTGKGSEDEWEQVGPK. Thr-566 carries the post-translational modification Phosphothreonine. Ser-570 is modified (phosphoserine). The Proton acceptor role is filled by His-743.

The protein belongs to the peptidase C19 family. USP10 subfamily. As to quaternary structure, found in a deubiquitination complex with TANK, USP10 and ZC3H12A; this complex inhibits genotoxic stress- or interleukin-1-beta (IL1B)-mediated NF-kappa-B activation by promoting IKBKG or TRAF6 deubiquitination. Interacts with IKBKG; this interaction increases in response to DNA damage. Interacts with TANK; this interaction increases in response to DNA damage. Interacts with TRAF6; this interaction increases in response to DNA damage. Interacts with ZC3H12A; this interaction increases in response to DNA damage. Interacts with G3BP1 (via NTF2 domain) and G3BP2 (via NTF2 domain); inhibiting stress granule formation. In terms of processing, phosphorylated by ATM following DNA damage, leading to stabilization and translocation it to the nucleus. Post-translationally, ubiquitinated. Deubiquitinated by USP13.

The protein resides in the cytoplasm. It is found in the nucleus. It localises to the early endosome. It carries out the reaction Thiol-dependent hydrolysis of ester, thioester, amide, peptide and isopeptide bonds formed by the C-terminal Gly of ubiquitin (a 76-residue protein attached to proteins as an intracellular targeting signal).. Its activity is regulated as follows. Specifically inhibited by spautin-1 (specific and potent autophagy inhibitor-1), a derivative of MBCQ that binds to USP10 and inhibits deubiquitinase activity. Regulated by PIK3C3/VPS34-containing complexes. Hydrolase that can remove conjugated ubiquitin from target proteins such as p53/TP53, RPS2/us5, RPS3/us3, RPS10/eS10, BECN1, SNX3 and CFTR. Acts as an essential regulator of p53/TP53 stability: in unstressed cells, specifically deubiquitinates p53/TP53 in the cytoplasm, leading to counteract MDM2 action and stabilize p53/TP53. Following DNA damage, translocates to the nucleus and deubiquitinates p53/TP53, leading to regulate the p53/TP53-dependent DNA damage response. Component of a regulatory loop that controls autophagy and p53/TP53 levels: mediates deubiquitination of BECN1, a key regulator of autophagy, leading to stabilize the PIK3C3/VPS34-containing complexes. In turn, PIK3C3/VPS34-containing complexes regulate USP10 stability, suggesting the existence of a regulatory system by which PIK3C3/VPS34-containing complexes regulate p53/TP53 protein levels via USP10 and USP13. Does not deubiquitinate MDM2. Plays a key role in 40S ribosome subunit recycling when a ribosome has stalled during translation: acts both by inhibiting formation of stress granules, which store stalled translation pre-initiation complexes, and mediating deubiquitination of 40S ribosome subunits. Acts as a negative regulator of stress granules formation by lowering G3BP1 and G3BP2 valence, thereby preventing G3BP1 and G3BP2 ability to undergo liquid-liquid phase separation (LLPS) and assembly of stress granules. Promotes 40S ribosome subunit recycling following ribosome dissociation in response to ribosome stalling by mediating deubiquitination of 40S ribosomal proteins RPS2/us5, RPS3/us3 and RPS10/eS10, thereby preventing their degradation by the proteasome. Part of a ribosome quality control that takes place when ribosomes have stalled during translation initiation (iRQC): USP10 acts by removing monoubiquitination of RPS2/us5 and RPS3/us3, promoting 40S ribosomal subunit recycling. Deubiquitinates CFTR in early endosomes, enhancing its endocytic recycling. Involved in a TANK-dependent negative feedback response to attenuate NF-kappa-B activation via deubiquitinating IKBKG or TRAF6 in response to interleukin-1-beta (IL1B) stimulation or upon DNA damage. Deubiquitinates TBX21 leading to its stabilization. Plays a negative role in the RLR signaling pathway upon RNA virus infection by blocking the RIGI-mediated MAVS activation. Mechanistically, removes the unanchored 'Lys-63'-linked polyubiquitin chains of MAVS to inhibit its aggregation, essential for its activation. The chain is Ubiquitin carboxyl-terminal hydrolase 10 (Usp10) from Mus musculus (Mouse).